A 445-amino-acid chain; its full sequence is Ribulose bisphosphate carboxylase large chain (445 aa).

Asn-89 and Thr-139 together coordinate substrate. Lys-141 (proton acceptor) is an active-site residue. Lys-143 provides a ligand contact to substrate. Residues Lys-167, Asp-169, and Glu-170 each coordinate Mg(2+). N6-carboxylysine is present on Lys-167. The Proton acceptor role is filled by His-260. The substrate site is built by Arg-261, His-293, and Ser-345.

Belongs to the RuBisCO large chain family. Type I subfamily. In terms of assembly, heterohexadecamer of 8 large chains and 8 small chains; disulfide-linked. The disulfide link is formed within the large subunit homodimers. Mg(2+) is required as a cofactor. Post-translationally, the disulfide bond which can form in the large chain dimeric partners within the hexadecamer appears to be associated with oxidative stress and protein turnover.

The protein localises to the plastid. It is found in the chloroplast. It carries out the reaction 2 (2R)-3-phosphoglycerate + 2 H(+) = D-ribulose 1,5-bisphosphate + CO2 + H2O. The catalysed reaction is D-ribulose 1,5-bisphosphate + O2 = 2-phosphoglycolate + (2R)-3-phosphoglycerate + 2 H(+). RuBisCO catalyzes two reactions: the carboxylation of D-ribulose 1,5-bisphosphate, the primary event in carbon dioxide fixation, as well as the oxidative fragmentation of the pentose substrate in the photorespiration process. Both reactions occur simultaneously and in competition at the same active site. This chain is Ribulose bisphosphate carboxylase large chain, found in Callicarpa dichotoma (Purple beautyberry).